A 257-amino-acid polypeptide reads, in one-letter code: Adenylate kinase (257 aa).

52 to 57 contributes to the ATP binding site; that stretch reads GAGKGT. An NMP region spans residues 72–101; it reads ATGDMLRSQVAKKTELGKEAKKIMDQGGLV. AMP contacts are provided by residues Thr-73, Arg-78, 99 to 101, 128 to 131, and Gln-135; these read GLV and GFPR. Residues 169–206 form an LID region; the sequence is GRLVHPASGRSYHKIFNPPKNDMKDDVTGEPLIQRSDD. ATP is bound by residues Arg-170 and 179–180; that span reads SY. 2 residues coordinate AMP: Arg-203 and Arg-214. Gln-242 is an ATP binding site.

This sequence belongs to the adenylate kinase family. AK2 subfamily. Monomer.

It localises to the cytoplasm. The protein resides in the cytosol. It is found in the mitochondrion intermembrane space. The enzyme catalyses AMP + ATP = 2 ADP. Its function is as follows. Catalyzes the reversible transfer of the terminal phosphate group between ATP and AMP. Plays an important role in cellular energy homeostasis and in adenine nucleotide metabolism. Adenylate kinase activity is critical for regulation of the phosphate utilization and the AMP de novo biosynthesis pathways. This chain is Adenylate kinase (adk1), found in Aspergillus fumigatus (strain CBS 144.89 / FGSC A1163 / CEA10) (Neosartorya fumigata).